The following is a 153-amino-acid chain: Pheromone-binding protein Gp-9 (153 aa).

The N-terminal stretch at 1–19 is a signal peptide; sequence MKTFVLHIFIFALVAFASA. 3 cysteine pairs are disulfide-bonded: C37/C77, C73/C129, and C118/C138.

Belongs to the PBP/GOBP family. Homodimer.

The protein localises to the secreted. Functionally, colony queen number, a major feature of social organization, is associated with worker genotype for Gp-9. Colonies are headed by either a single reproductive queen (monogyne form) or multiple queens (polygyne form). Differences in worker Gp-9 genotypes between social forms may cause differences in workers' abilities to recognize queens and regulate their numbers. This Solenopsis interrupta (Fire ant) protein is Pheromone-binding protein Gp-9.